The following is a 301-amino-acid chain: 2-dehydropantoate 2-reductase (301 aa).

NADP(+) is bound by residues Gly7–Gly12, Lys74, Asn99, and Ala123. The active-site Proton donor is the Lys179. Substrate-binding positions include Lys179, Asn183, Asn187, Asn197, and Asn246–Ser249. Glu261 provides a ligand contact to NADP(+).

The protein belongs to the ketopantoate reductase family.

Its subcellular location is the cytoplasm. It catalyses the reaction (R)-pantoate + NAD(+) = 2-dehydropantoate + NADH + H(+). It carries out the reaction (R)-pantoate + NADP(+) = 2-dehydropantoate + NADPH + H(+). Its pathway is cofactor biosynthesis; coenzyme A biosynthesis. In terms of biological role, catalyzes the NAD(P)H-dependent reduction of ketopantoate into pantoic acid. This chain is 2-dehydropantoate 2-reductase, found in Pyrococcus horikoshii (strain ATCC 700860 / DSM 12428 / JCM 9974 / NBRC 100139 / OT-3).